The following is a 50-amino-acid chain: U2-ctenitoxin-Pk1a (50 aa).

5 cysteine pairs are disulfide-bonded: Cys1-Cys15, Cys8-Cys21, Cys12-Cys47, Cys14-Cys31, and Cys23-Cys29.

In terms of tissue distribution, expressed by the venom gland.

Its subcellular location is the secreted. Its function is as follows. Insecticidal neurotoxin that reversibly inhibits the N-methyl-D-aspartate (NMDA)-subtype of ionotropic glutamate receptor (GRIN) and inhibits inactivation of insect sodium channels (Nav). In vivo, is highly toxic to insects. This chain is U2-ctenitoxin-Pk1a, found in Phoneutria keyserlingi (Brazilian wandering spider).